Consider the following 434-residue polypeptide: Homoserine dehydrogenase (434 aa).

Residues Thr-13 and Val-14 each coordinate NADPH. Residues Val-14, Ala-33, and Ala-43 each coordinate NAD(+). Residue Val-14 participates in NADP(+) binding. Arg-45 lines the NADPH pocket. NADP(+)-binding residues include Arg-45, Arg-46, and Lys-103. Lys-103 provides a ligand contact to NADPH. Na(+) contacts are provided by Glu-127, Val-130, Gly-132, and Ile-134. Gly-185 and Glu-188 together coordinate NADP(+). Residues Glu-188 and Asp-199 each contribute to the L-homoserine site. Residue Lys-203 is the Proton donor of the active site. Position 300 (Gly-300) interacts with NADPH. Position 300 (Gly-300) interacts with NAD(+). An NADP(+)-binding site is contributed by Gly-300. Positions 353 to 429 constitute an ACT domain; sequence YLRIQAKDHP…GVSGPVVRIR (77 aa).

The protein belongs to the homoserine dehydrogenase family. A metal cation serves as cofactor.

It carries out the reaction L-homoserine + NADP(+) = L-aspartate 4-semialdehyde + NADPH + H(+). The enzyme catalyses L-homoserine + NAD(+) = L-aspartate 4-semialdehyde + NADH + H(+). It participates in amino-acid biosynthesis; L-methionine biosynthesis via de novo pathway; L-homoserine from L-aspartate: step 3/3. The protein operates within amino-acid biosynthesis; L-threonine biosynthesis; L-threonine from L-aspartate: step 3/5. With respect to regulation, feedback inhibition by threonine. Catalyzes the conversion of L-aspartate-beta-semialdehyde (L-Asa) to L-homoserine (L-Hse), the third step in the biosynthesis of threonine and methionine from aspartate. This is Homoserine dehydrogenase (hom) from Pseudomonas aeruginosa (strain ATCC 15692 / DSM 22644 / CIP 104116 / JCM 14847 / LMG 12228 / 1C / PRS 101 / PAO1).